The chain runs to 630 residues: 1-deoxy-D-xylulose-5-phosphate synthase (630 aa).

Thiamine diphosphate-binding positions include H72 and 113 to 115 (GHS). D144 contacts Mg(2+). Residues 145–146 (GA), N173, Y284, and E367 each bind thiamine diphosphate. N173 serves as a coordination point for Mg(2+).

Belongs to the transketolase family. DXPS subfamily. In terms of assembly, homodimer. The cofactor is Mg(2+). It depends on thiamine diphosphate as a cofactor.

The catalysed reaction is D-glyceraldehyde 3-phosphate + pyruvate + H(+) = 1-deoxy-D-xylulose 5-phosphate + CO2. Its pathway is metabolic intermediate biosynthesis; 1-deoxy-D-xylulose 5-phosphate biosynthesis; 1-deoxy-D-xylulose 5-phosphate from D-glyceraldehyde 3-phosphate and pyruvate: step 1/1. In terms of biological role, catalyzes the acyloin condensation reaction between C atoms 2 and 3 of pyruvate and glyceraldehyde 3-phosphate to yield 1-deoxy-D-xylulose-5-phosphate (DXP). In Bacillus cereus (strain G9842), this protein is 1-deoxy-D-xylulose-5-phosphate synthase.